The primary structure comprises 171 residues: UPF0316 protein EAT1b_0871 (171 aa).

The next 3 helical transmembrane spans lie at 4-24, 32-52, and 57-77; these read ILLILLLQLIYVPVLTLRTIM, IAGLFGTLETLIYIFALGIVF, and TVGMIVYAVGFGLGILLGGFV.

Belongs to the UPF0316 family.

It localises to the cell membrane. The sequence is that of UPF0316 protein EAT1b_0871 from Exiguobacterium sp. (strain ATCC BAA-1283 / AT1b).